A 236-amino-acid polypeptide reads, in one-letter code: UPF0257 lipoprotein YnfC (236 aa).

Positions 1-16 are cleaved as a signal peptide; the sequence is MKYKLLPCLLAIFLTG. Cys17 carries N-palmitoyl cysteine lipidation. Cys17 carries S-diacylglycerol cysteine lipidation.

This sequence belongs to the UPF0257 family.

Its subcellular location is the cell membrane. The sequence is that of UPF0257 lipoprotein YnfC (ynfC) from Shigella flexneri.